We begin with the raw amino-acid sequence, 66 residues long: MLARTCSFCGKTIEPGTGIMYVRKDGAILYFCSNKCKKNMIGLNRVPRYVRWTNEYHELKKMRTRS.

Positions 6, 9, 32, and 36 each coordinate Zn(2+). The C4-type zinc-finger motif lies at 6 to 36; sequence CSFCGKTIEPGTGIMYVRKDGAILYFCSNKC.

The protein belongs to the eukaryotic ribosomal protein eL24 family. As to quaternary structure, part of the 50S ribosomal subunit. Forms a cluster with proteins L3 and L14. Zn(2+) serves as cofactor.

Functionally, binds to the 23S rRNA. The protein is Large ribosomal subunit protein eL24 of Thermoplasma volcanium (strain ATCC 51530 / DSM 4299 / JCM 9571 / NBRC 15438 / GSS1).